A 426-amino-acid chain; its full sequence is Putative phosphate permease TC_0064 (426 aa).

11 consecutive transmembrane segments (helical) span residues M1–A21, L37–L57, V83–F103, G104–L124, V140–I160, A183–V203, V207–V227, L260–A280, V309–G329, F365–A385, and I399–L419.

The protein belongs to the inorganic phosphate transporter (PiT) (TC 2.A.20) family.

The protein localises to the cell membrane. Functionally, potential transporter for phosphate. The chain is Putative phosphate permease TC_0064 from Chlamydia muridarum (strain MoPn / Nigg).